We begin with the raw amino-acid sequence, 536 residues long: Portal protein (536 aa).

The protein belongs to the podoviridae portal protein family. As to quaternary structure, homododecamer. Interacts with major capsid protein. Interacts with the tail tube protein gp11. Interacts with the terminase large subunit. Interacts with the internal virion protein gp14.

Its subcellular location is the virion. Functionally, forms the portal vertex of the capsid. This portal plays critical roles in head assembly, genome packaging, neck/tail attachment, and genome ejection. The portal protein multimerizes as a single ring-shaped homododecamer arranged around a central channel. The chain is Portal protein from Escherichia phage T7 (Bacteriophage T7).